A 424-amino-acid chain; its full sequence is Hemagglutinin-esterase (424 aa).

The signal sequence occupies residues 1–16; the sequence is MFLLPRFVLVSCIIGS. An esterase domain 1 region spans residues 7–127; sequence FVLVSCIIGS…SNDIWMQNKG (121 aa). Topologically, residues 17-392 are virion surface; sequence LGFDNPPTNV…PICVYDPLPI (376 aa). The active-site Nucleophile is S40. A disulfide bond links C44 and C65. N54, N89, N153, N236, and N301 each carry an N-linked (GlcNAc...) asparagine; by host glycan. Intrachain disulfides connect C113-C162, C197-C276, and C205-C249. Positions 128-266 are receptor binding; sequence LFYTQVYKNM…GNYLAISNEL (139 aa). Residues 267 to 379 form an esterase domain 2 region; the sequence is LLTVPTKAIC…RCPTAADINT (113 aa). Residues C307 and C312 are joined by a disulfide bond. A glycan (N-linked (GlcNAc...) asparagine; by host) is linked at N316. Active-site charge relay system residues include D326 and H329. Residues C347 and C371 are joined by a disulfide bond. A glycan (N-linked (GlcNAc...) asparagine; by host) is linked at N358. The helical transmembrane segment at 393–413 threads the bilayer; the sequence is IFLGILLGVAVIIIVVLLLYF. Residues 414–424 lie on the Intravirion side of the membrane; sequence MVDNGTRLHDA. The N-linked (GlcNAc...) asparagine; by host glycan is linked to N417.

The protein belongs to the influenza type C/coronaviruses hemagglutinin-esterase family. In terms of assembly, homodimer; disulfide-linked. Forms a complex with the M protein in the pre-Golgi. Associates then with S-M complex to form a ternary complex S-M-HE. N-glycosylated in the host RER.

Its subcellular location is the virion membrane. The protein resides in the host cell membrane. It carries out the reaction N-acetyl-9-O-acetylneuraminate + H2O = N-acetylneuraminate + acetate + H(+). The catalysed reaction is N-acetyl-4-O-acetylneuraminate + H2O = N-acetylneuraminate + acetate + H(+). Structural protein that makes short spikes at the surface of the virus. Contains receptor binding and receptor-destroying activities. Mediates de-O-acetylation of N-acetyl-4-O-acetylneuraminic acid, which is probably the receptor determinant recognized by the virus on the surface of erythrocytes and susceptible cells. This receptor-destroying activity is important for virus release as it probably helps preventing self-aggregation and ensures the efficient spread of the progeny virus from cell to cell. May serve as a secondary viral attachment protein for initiating infection, the spike protein being the major one. May become a target for both the humoral and the cellular branches of the immune system. The chain is Hemagglutinin-esterase from Bovine coronavirus (strain Ontario) (BCoV).